A 419-amino-acid chain; its full sequence is DNA ligase (419 aa).

The tract at residues 1 to 120 (MLNHFPGHCS…ARQKRGAHTN (120 aa)) is NTD. Residues 121–317 (TGMIPPMLVK…NYHSAHLAKL (197 aa)) form an AD domain region. The active-site N6-AMP-lysine intermediate is the Lys-151. Residues 318 to 419 (KPLLDAEFIL…REPINVLEII (102 aa)) are OB domain.

This sequence belongs to the ATP-dependent DNA ligase family.

The protein localises to the virion. The catalysed reaction is ATP + (deoxyribonucleotide)n-3'-hydroxyl + 5'-phospho-(deoxyribonucleotide)m = (deoxyribonucleotide)n+m + AMP + diphosphate.. Functionally, very low-fidelity DNA ligase that seals nicks in double-stranded DNA during DNA repair. Together with the viral repair DNA polymerase X, fills the single nucleotide gaps generated by the AP endonuclease. It is not essential for viral replication and recombination. Displays a very low adenylation activity towards DNA with 3'-dideoxy- or 3'-amino-terminated nicks compared to regular nick DNA. The chain is DNA ligase from Ornithodoros (relapsing fever ticks).